Here is a 529-residue protein sequence, read N- to C-terminus: Plexin domain-containing protein 2 (529 aa).

Positions 1 to 30 (MARFPKADLAAAGVMLLCHFFTDQFQFADG) are cleaved as a signal peptide. At 31 to 454 (KPGDQILDWQ…AEKKGGTLHA (424 aa)) the chain is on the extracellular side. Residues 80-104 (ASVGQDSPEPRSFTDLLLDDGQDNN) form a disordered region. 2 N-linked (GlcNAc...) asparagine glycosylation sites follow: Asn103 and Asn160. The PSI domain maps to 327 to 372 (TCLQFNRCGPCVSSQIGFNCSWCSKLQRCSSGFDRHRQDWVDSGCP). A helical membrane pass occupies residues 455–475 (GLIIGILILVLIVATAILVTV). At 476–529 (YMYHHPTSAASIFFIERRPSRWPAMKFRRGSGHPAYAEVEPVGEKEGFIVSEQC) the chain is on the cytoplasmic side. The residue at position 506 (Ser506) is a Phosphoserine.

This sequence belongs to the plexin family. In terms of assembly, interacts with CTTN. As to expression, expressed in the endothelial cells of the stroma but not in the endothelial cells of normal colonic tissue.

The protein localises to the membrane. Functionally, may play a role in tumor angiogenesis. The protein is Plexin domain-containing protein 2 (PLXDC2) of Homo sapiens (Human).